A 229-amino-acid chain; its full sequence is Matrix protein (229 aa).

The dynamin binding signature appears at 2-4 (QRL). The PPXY motif signature appears at 30 to 33 (PPSY). The PTAP/PSAP motif motif lies at 42 to 45 (PTAP).

The protein belongs to the vesiculoviruses matrix protein family. Homomultimer. Interacts with viral nucleocapsid; this interaction contributes to the virion assembly. Interacts with the viral envelope glycoprotein; this interaction contributes to the virion assembly. Interacts with host RAE1-NUP98 complex. Interacts with host NEDD4 and TSG101. Interacts with host dynamin. Interacts with host NDUFAF4; the interaction inhibits viral propagation and is independent of interferon activation. Interacts with host GTF2H5; the interaction may inhibit host transcription. Interacts with host DRG1. Interaction with host CTDNEP1. Interaction with host ABCE1. In terms of processing, phosphorylated by host.

Its subcellular location is the virion. The protein resides in the host endomembrane system. It localises to the host nucleus membrane. It is found in the host nucleus. The protein localises to the host cytoplasm. Functionally, forms a double layer around the helical nucleocapsid, the inner matrix layer binding to the N helix and the outer matrix layer binding to the envelope glycoprotein. Plays a major role in assembly and budding of virion, by recruiting cellular partners of the ESCRT complexes that play a key role in releasing the budding particle from the host membrane. Condensates the ribonucleocapsid core during virus assembly. Inhibits the host mRNA nuclear export thereby inducing the shut off of cellular transcription and preventing the interferon signaling and the establishment of antiviral state in infected cells. This shutoff presumably inhibits interferon signaling and thus establishment of antiviral state in virus infected cells. Induces cell-rounding, cytoskeleton disorganization and apoptosis in infected cell. Inhibits host transcription, possibly through interaction with host DNA repair factor IIH/TFIIH GTF2H5 subunit. This chain is Matrix protein (M), found in Homo sapiens (Human).